The chain runs to 230 residues: Urease accessory protein UreF (230 aa).

The protein belongs to the UreF family. As to quaternary structure, ureD, UreF and UreG form a complex that acts as a GTP-hydrolysis-dependent molecular chaperone, activating the urease apoprotein by helping to assemble the nickel containing metallocenter of UreC. The UreE protein probably delivers the nickel.

The protein localises to the cytoplasm. Its function is as follows. Required for maturation of urease via the functional incorporation of the urease nickel metallocenter. The polypeptide is Urease accessory protein UreF (Marinomonas sp. (strain MWYL1)).